The chain runs to 205 residues: GTP cyclohydrolase 1 (205 aa).

Zn(2+) contacts are provided by C94, H97, and C165.

Belongs to the GTP cyclohydrolase I family. Toroid-shaped homodecamer, composed of two pentamers of five dimers.

It carries out the reaction GTP + H2O = 7,8-dihydroneopterin 3'-triphosphate + formate + H(+). It participates in cofactor biosynthesis; 7,8-dihydroneopterin triphosphate biosynthesis; 7,8-dihydroneopterin triphosphate from GTP: step 1/1. The sequence is that of GTP cyclohydrolase 1 from Sinorhizobium medicae (strain WSM419) (Ensifer medicae).